Consider the following 430-residue polypeptide: Tol-Pal system protein TolB (430 aa).

Residues 1 to 21 (MKQAFRVALSVLMLFVAVAHA) form the signal peptide.

The protein belongs to the TolB family. In terms of assembly, the Tol-Pal system is composed of five core proteins: the inner membrane proteins TolA, TolQ and TolR, the periplasmic protein TolB and the outer membrane protein Pal. They form a network linking the inner and outer membranes and the peptidoglycan layer.

It is found in the periplasm. Its function is as follows. Part of the Tol-Pal system, which plays a role in outer membrane invagination during cell division and is important for maintaining outer membrane integrity. TolB occupies a key intermediary position in the Tol-Pal system because it communicates directly with both membrane-embedded components, Pal in the outer membrane and TolA in the inner membrane. The protein is Tol-Pal system protein TolB of Erwinia tasmaniensis (strain DSM 17950 / CFBP 7177 / CIP 109463 / NCPPB 4357 / Et1/99).